A 207-amino-acid chain; its full sequence is Dephospho-CoA kinase (207 aa).

Residues 8-207 (AIALTGSIGS…LPCVDCVQSS (200 aa)) enclose the DPCK domain. Residue 16 to 21 (GSGKST) participates in ATP binding.

It belongs to the CoaE family.

The protein resides in the cytoplasm. It carries out the reaction 3'-dephospho-CoA + ATP = ADP + CoA + H(+). The protein operates within cofactor biosynthesis; coenzyme A biosynthesis; CoA from (R)-pantothenate: step 5/5. In terms of biological role, catalyzes the phosphorylation of the 3'-hydroxyl group of dephosphocoenzyme A to form coenzyme A. The protein is Dephospho-CoA kinase of Helicobacter hepaticus (strain ATCC 51449 / 3B1).